The following is a 254-amino-acid chain: Probable pectate lyase E (254 aa).

The signal sequence occupies residues 1 to 17 (MLQSLLLLPLFLTSAFA). N-linked (GlcNAc...) asparagine glycosylation occurs at Asn-175. Residues 228 to 254 (NNNGKEPKKKSSGPSKACEYNQPLKKC) are disordered.

It belongs to the polysaccharide lyase 3 family. It depends on Ca(2+) as a cofactor.

It localises to the secreted. It carries out the reaction Eliminative cleavage of (1-&gt;4)-alpha-D-galacturonan to give oligosaccharides with 4-deoxy-alpha-D-galact-4-enuronosyl groups at their non-reducing ends.. Functionally, pectinolytic enzyme consist of four classes of enzymes: pectin lyase, polygalacturonase, pectin methylesterase and rhamnogalacturonase. Among pectinolytic enzymes, pectin lyase is the most important in depolymerization of pectin, since it cleaves internal glycosidic bonds of highly methylated pectins. Favors pectate, the anion, over pectin, the methyl ester. The chain is Probable pectate lyase E (plyE) from Aspergillus clavatus (strain ATCC 1007 / CBS 513.65 / DSM 816 / NCTC 3887 / NRRL 1 / QM 1276 / 107).